The chain runs to 622 residues: 1-deoxy-D-xylulose-5-phosphate synthase (622 aa).

Residues His-80 and Gly-121 to Ser-123 contribute to the thiamine diphosphate site. Asp-152 contributes to the Mg(2+) binding site. Residues Gly-153–Ala-154, Asn-181, Tyr-288, and Glu-370 each bind thiamine diphosphate. Asn-181 is a Mg(2+) binding site.

Belongs to the transketolase family. DXPS subfamily. Homodimer. It depends on Mg(2+) as a cofactor. Requires thiamine diphosphate as cofactor.

The enzyme catalyses D-glyceraldehyde 3-phosphate + pyruvate + H(+) = 1-deoxy-D-xylulose 5-phosphate + CO2. It participates in metabolic intermediate biosynthesis; 1-deoxy-D-xylulose 5-phosphate biosynthesis; 1-deoxy-D-xylulose 5-phosphate from D-glyceraldehyde 3-phosphate and pyruvate: step 1/1. Its function is as follows. Catalyzes the acyloin condensation reaction between C atoms 2 and 3 of pyruvate and glyceraldehyde 3-phosphate to yield 1-deoxy-D-xylulose-5-phosphate (DXP). In Shewanella denitrificans (strain OS217 / ATCC BAA-1090 / DSM 15013), this protein is 1-deoxy-D-xylulose-5-phosphate synthase.